The sequence spans 642 residues: Glutamyl-tRNA(Gln) amidotransferase subunit E (642 aa).

It belongs to the GatB/GatE family. GatE subfamily. Heterodimer of GatD and GatE.

It carries out the reaction L-glutamyl-tRNA(Gln) + L-glutamine + ATP + H2O = L-glutaminyl-tRNA(Gln) + L-glutamate + ADP + phosphate + H(+). Allows the formation of correctly charged Gln-tRNA(Gln) through the transamidation of misacylated Glu-tRNA(Gln) in organisms which lack glutaminyl-tRNA synthetase. The reaction takes place in the presence of glutamine and ATP through an activated gamma-phospho-Glu-tRNA(Gln). The GatDE system is specific for glutamate and does not act on aspartate. The polypeptide is Glutamyl-tRNA(Gln) amidotransferase subunit E (Aeropyrum pernix (strain ATCC 700893 / DSM 11879 / JCM 9820 / NBRC 100138 / K1)).